A 239-amino-acid polypeptide reads, in one-letter code: Transcriptional regulatory protein BtsR (239 aa).

The Response regulatory domain occupies 3-116 (KVLIVDDEPL…RLEKTLHRLR (114 aa)). D54 carries the 4-aspartylphosphate modification. The 103-residue stretch at 137-239 (IPCTGHSRIY…LKSLKEAIGL (103 aa)) folds into the HTH LytTR-type domain.

Phosphorylated by BtsS.

In terms of biological role, member of the two-component regulatory system BtsS/BtsR. BtsR regulates expression of btsT by binding to its promoter region. This Salmonella typhimurium (strain LT2 / SGSC1412 / ATCC 700720) protein is Transcriptional regulatory protein BtsR.